The primary structure comprises 271 residues: Large ribosomal subunit protein uL18 (271 aa).

A compositionally biased stretch (basic and acidic residues) spans 245 to 264; the sequence is IRENPCPPKKERTKPADAKR. The tract at residues 245–271 is disordered; sequence IRENPCPPKKERTKPADAKRWSPQAHL.

The protein belongs to the universal ribosomal protein uL18 family. In terms of assembly, component of the large ribosomal subunit (LSU).

It localises to the cytoplasm. The protein resides in the nucleus. Its function is as follows. Component of the ribosome, a large ribonucleoprotein complex responsible for the synthesis of proteins in the cell. The small ribosomal subunit (SSU) binds messenger RNAs (mRNAs) and translates the encoded message by selecting cognate aminoacyl-transfer RNA (tRNA) molecules. The large subunit (LSU) contains the ribosomal catalytic site termed the peptidyl transferase center (PTC), which catalyzes the formation of peptide bonds, thereby polymerizing the amino acids delivered by tRNAs into a polypeptide chain. The nascent polypeptides leave the ribosome through a tunnel in the LSU and interact with protein factors that function in enzymatic processing, targeting, and the membrane insertion of nascent chains at the exit of the ribosomal tunnel. The protein is Large ribosomal subunit protein uL18 (RPL5) of Dunaliella salina (Green alga).